Consider the following 245-residue polypeptide: 1-(5-phosphoribosyl)-5-[(5-phosphoribosylamino)methylideneamino] imidazole-4-carboxamide isomerase (245 aa).

The active-site Proton acceptor is Asp-7. Asp-129 acts as the Proton donor in catalysis.

Belongs to the HisA/HisF family.

It is found in the cytoplasm. The enzyme catalyses 1-(5-phospho-beta-D-ribosyl)-5-[(5-phospho-beta-D-ribosylamino)methylideneamino]imidazole-4-carboxamide = 5-[(5-phospho-1-deoxy-D-ribulos-1-ylimino)methylamino]-1-(5-phospho-beta-D-ribosyl)imidazole-4-carboxamide. It functions in the pathway amino-acid biosynthesis; L-histidine biosynthesis; L-histidine from 5-phospho-alpha-D-ribose 1-diphosphate: step 4/9. This Escherichia coli (strain SMS-3-5 / SECEC) protein is 1-(5-phosphoribosyl)-5-[(5-phosphoribosylamino)methylideneamino] imidazole-4-carboxamide isomerase.